The primary structure comprises 122 residues: Large ribosomal subunit protein uL14 (122 aa).

This sequence belongs to the universal ribosomal protein uL14 family. As to quaternary structure, part of the 50S ribosomal subunit. Forms a cluster with proteins L3 and L19. In the 70S ribosome, L14 and L19 interact and together make contacts with the 16S rRNA in bridges B5 and B8.

In terms of biological role, binds to 23S rRNA. Forms part of two intersubunit bridges in the 70S ribosome. The sequence is that of Large ribosomal subunit protein uL14 from Paraburkholderia phytofirmans (strain DSM 17436 / LMG 22146 / PsJN) (Burkholderia phytofirmans).